A 151-amino-acid polypeptide reads, in one-letter code: Peptide deformylase (151 aa).

Residues Cys88 and His130 each contribute to the Fe cation site. Glu131 is an active-site residue. Fe cation is bound at residue His134.

Belongs to the polypeptide deformylase family. The cofactor is Fe(2+).

The enzyme catalyses N-terminal N-formyl-L-methionyl-[peptide] + H2O = N-terminal L-methionyl-[peptide] + formate. In terms of biological role, removes the formyl group from the N-terminal Met of newly synthesized proteins. Requires at least a dipeptide for an efficient rate of reaction. N-terminal L-methionine is a prerequisite for activity but the enzyme has broad specificity at other positions. This chain is Peptide deformylase, found in Heliobacterium modesticaldum (strain ATCC 51547 / Ice1).